The following is a 288-amino-acid chain: 4-diphosphocytidyl-2-C-methyl-D-erythritol kinase (288 aa).

The active site involves Lys13. 96–106 (PIGGGIGGGSS) is an ATP binding site. Asp138 is an active-site residue.

It belongs to the GHMP kinase family. IspE subfamily.

The catalysed reaction is 4-CDP-2-C-methyl-D-erythritol + ATP = 4-CDP-2-C-methyl-D-erythritol 2-phosphate + ADP + H(+). Its pathway is isoprenoid biosynthesis; isopentenyl diphosphate biosynthesis via DXP pathway; isopentenyl diphosphate from 1-deoxy-D-xylulose 5-phosphate: step 3/6. Catalyzes the phosphorylation of the position 2 hydroxy group of 4-diphosphocytidyl-2C-methyl-D-erythritol. This chain is 4-diphosphocytidyl-2-C-methyl-D-erythritol kinase, found in Aliivibrio salmonicida (strain LFI1238) (Vibrio salmonicida (strain LFI1238)).